Here is a 1237-residue protein sequence, read N- to C-terminus: Clustered mitochondria protein homolog (1237 aa).

Residues Asp291–Ser535 enclose the Clu domain. Composition is skewed to basic and acidic residues over residues Arg575 to Glu597 and Ser845 to Pro854. Disordered regions lie at residues Arg575–Ser614 and Ser845–Ser886. TPR repeat units follow at residues Ala957–Thr990, Ile999–Ile1032, and Ile1041–Leu1074. Disordered stretches follow at residues Arg1152 to Gly1189 and Phe1201 to Ala1237. Residues Thr1156–Ser1187 are compositionally biased toward polar residues.

Belongs to the CLU family. May associate with the eukaryotic translation initiation factor 3 (eIF-3) complex.

The protein resides in the cytoplasm. Functionally, mRNA-binding protein involved in proper cytoplasmic distribution of mitochondria. The sequence is that of Clustered mitochondria protein homolog from Ajellomyces capsulatus (strain NAm1 / WU24) (Darling's disease fungus).